The sequence spans 217 residues: Large ribosomal subunit protein uL1 (217 aa).

At serine 2 the chain carries N-acetylserine. The residue at position 11 (tyrosine 11) is a Phosphotyrosine. Lysine 91 and lysine 106 each carry N6-acetyllysine. Position 118 is an N6-acetyllysine; alternate (lysine 118). Lysine 118 is covalently cross-linked (Glycyl lysine isopeptide (Lys-Gly) (interchain with G-Cter in SUMO1); alternate). Lysine 118 is covalently cross-linked (Glycyl lysine isopeptide (Lys-Gly) (interchain with G-Cter in SUMO2); alternate).

Belongs to the universal ribosomal protein uL1 family. Component of the large ribosomal subunit.

The protein resides in the cytoplasm. Its function is as follows. Component of the large ribosomal subunit. The ribosome is a large ribonucleoprotein complex responsible for the synthesis of proteins in the cell. This is Large ribosomal subunit protein uL1 (RPL10A) from Macaca fascicularis (Crab-eating macaque).